Consider the following 350-residue polypeptide: Protein-glutamate methylesterase/protein-glutamine glutaminase 1 (350 aa).

In terms of domain architecture, Response regulatory spans Arg-6–Glu-123. Asp-57 carries the 4-aspartylphosphate modification. Residues Leu-159–Ala-350 enclose the CheB-type methylesterase domain. Residues Ser-171, His-197, and Asp-293 contribute to the active site.

It belongs to the CheB family. In terms of processing, phosphorylated by CheA. Phosphorylation of the N-terminal regulatory domain activates the methylesterase activity.

The protein resides in the cytoplasm. The enzyme catalyses [protein]-L-glutamate 5-O-methyl ester + H2O = L-glutamyl-[protein] + methanol + H(+). The catalysed reaction is L-glutaminyl-[protein] + H2O = L-glutamyl-[protein] + NH4(+). Its function is as follows. Involved in chemotaxis. Part of a chemotaxis signal transduction system that modulates chemotaxis in response to various stimuli. Catalyzes the demethylation of specific methylglutamate residues introduced into the chemoreceptors (methyl-accepting chemotaxis proteins or MCP) by CheR. Also mediates the irreversible deamidation of specific glutamine residues to glutamic acid. This Dechloromonas aromatica (strain RCB) protein is Protein-glutamate methylesterase/protein-glutamine glutaminase 1.